Consider the following 336-residue polypeptide: Holliday junction branch migration complex subunit RuvB (336 aa).

Positions Ala4 to Tyr184 are large ATPase domain (RuvB-L). ATP contacts are provided by residues Ile23, Arg24, Gly65, Lys68, Thr69, Thr70, Glu131–Tyr133, Arg174, Tyr184, and Arg221. Position 69 (Thr69) interacts with Mg(2+). Residues Asn185–Asp255 form a small ATPAse domain (RuvB-S) region. Positions Asn258–Gly336 are head domain (RuvB-H). Arg313 and Arg318 together coordinate DNA.

It belongs to the RuvB family. In terms of assembly, homohexamer. Forms an RuvA(8)-RuvB(12)-Holliday junction (HJ) complex. HJ DNA is sandwiched between 2 RuvA tetramers; dsDNA enters through RuvA and exits via RuvB. An RuvB hexamer assembles on each DNA strand where it exits the tetramer. Each RuvB hexamer is contacted by two RuvA subunits (via domain III) on 2 adjacent RuvB subunits; this complex drives branch migration. In the full resolvosome a probable DNA-RuvA(4)-RuvB(12)-RuvC(2) complex forms which resolves the HJ.

The protein localises to the cytoplasm. It catalyses the reaction ATP + H2O = ADP + phosphate + H(+). Functionally, the RuvA-RuvB-RuvC complex processes Holliday junction (HJ) DNA during genetic recombination and DNA repair, while the RuvA-RuvB complex plays an important role in the rescue of blocked DNA replication forks via replication fork reversal (RFR). RuvA specifically binds to HJ cruciform DNA, conferring on it an open structure. The RuvB hexamer acts as an ATP-dependent pump, pulling dsDNA into and through the RuvAB complex. RuvB forms 2 homohexamers on either side of HJ DNA bound by 1 or 2 RuvA tetramers; 4 subunits per hexamer contact DNA at a time. Coordinated motions by a converter formed by DNA-disengaged RuvB subunits stimulates ATP hydrolysis and nucleotide exchange. Immobilization of the converter enables RuvB to convert the ATP-contained energy into a lever motion, pulling 2 nucleotides of DNA out of the RuvA tetramer per ATP hydrolyzed, thus driving DNA branch migration. The RuvB motors rotate together with the DNA substrate, which together with the progressing nucleotide cycle form the mechanistic basis for DNA recombination by continuous HJ branch migration. Branch migration allows RuvC to scan DNA until it finds its consensus sequence, where it cleaves and resolves cruciform DNA. The chain is Holliday junction branch migration complex subunit RuvB from Aeromonas hydrophila subsp. hydrophila (strain ATCC 7966 / DSM 30187 / BCRC 13018 / CCUG 14551 / JCM 1027 / KCTC 2358 / NCIMB 9240 / NCTC 8049).